The chain runs to 100 residues: Large ribosomal subunit protein bL21 (100 aa).

The protein belongs to the bacterial ribosomal protein bL21 family. In terms of assembly, part of the 50S ribosomal subunit. Contacts protein L20.

In terms of biological role, this protein binds to 23S rRNA in the presence of protein L20. In Mycoplasmopsis synoviae (strain 53) (Mycoplasma synoviae), this protein is Large ribosomal subunit protein bL21.